Here is a 219-residue protein sequence, read N- to C-terminus: FMN-dependent NADH:quinone oxidoreductase 2 (219 aa).

FMN-binding positions include S10 and 23-25; that span reads SIS.

It belongs to the azoreductase type 1 family. In terms of assembly, homodimer. Requires FMN as cofactor.

The catalysed reaction is 2 a quinone + NADH + H(+) = 2 a 1,4-benzosemiquinone + NAD(+). The enzyme catalyses N,N-dimethyl-1,4-phenylenediamine + anthranilate + 2 NAD(+) = 2-(4-dimethylaminophenyl)diazenylbenzoate + 2 NADH + 2 H(+). Quinone reductase that provides resistance to thiol-specific stress caused by electrophilic quinones. In terms of biological role, also exhibits azoreductase activity. Catalyzes the reductive cleavage of the azo bond in aromatic azo compounds to the corresponding amines. This Colwellia psychrerythraea (strain 34H / ATCC BAA-681) (Vibrio psychroerythus) protein is FMN-dependent NADH:quinone oxidoreductase 2.